Reading from the N-terminus, the 313-residue chain is tRNA pseudouridine synthase B (313 aa).

D46 acts as the Nucleophile in catalysis.

The protein belongs to the pseudouridine synthase TruB family. Type 1 subfamily.

The enzyme catalyses uridine(55) in tRNA = pseudouridine(55) in tRNA. Responsible for synthesis of pseudouridine from uracil-55 in the psi GC loop of transfer RNAs. The sequence is that of tRNA pseudouridine synthase B from Nitrosospira multiformis (strain ATCC 25196 / NCIMB 11849 / C 71).